The sequence spans 841 residues: Translation initiation factor IF-2 (841 aa).

Composition is skewed to basic and acidic residues over residues 1-12 (MSDNEIKNEAPK), 50-92 (EAAL…EATK), 114-170 (EQPK…REEA), 188-202 (READ…EANR), and 213-235 (KKGD…DVKG). Disordered regions lie at residues 1–24 (MSDN…KTTV) and 50–246 (EAAL…GSAL). A tr-type G domain is found at 340-510 (TRAPVVTIMG…LLQSEVLELT (171 aa)). Residues 349-356 (GHVDHGKT) form a G1 region. 349–356 (GHVDHGKT) contributes to the GTP binding site. Residues 374–378 (GITQH) form a G2 region. Residues 396-399 (DTPG) form a G3 region. GTP-binding positions include 396 to 400 (DTPGH) and 450 to 453 (NKID). Positions 450 to 453 (NKID) are G4. A G5 region spans residues 486–488 (SAK).

The protein belongs to the TRAFAC class translation factor GTPase superfamily. Classic translation factor GTPase family. IF-2 subfamily.

The protein localises to the cytoplasm. Its function is as follows. One of the essential components for the initiation of protein synthesis. Protects formylmethionyl-tRNA from spontaneous hydrolysis and promotes its binding to the 30S ribosomal subunits. Also involved in the hydrolysis of GTP during the formation of the 70S ribosomal complex. The sequence is that of Translation initiation factor IF-2 from Actinobacillus pleuropneumoniae serotype 3 (strain JL03).